A 520-amino-acid polypeptide reads, in one-letter code: Macrophage receptor MARCO (520 aa).

Residues 1–43 are Cytoplasmic-facing; sequence MRNKKILKEDELLSETQQAAFHQIAMEPFEINVPKPKRRNGVN. Residues 44-64 traverse the membrane as a helical; Signal-anchor for type II membrane protein segment; the sequence is FSLAVVVIYLILLTAGAGLLV. The Extracellular portion of the chain corresponds to 65-520; sequence VQVLNLQARL…EEDAGVECSV (456 aa). Residues asparagine 83 and asparagine 136 are each glycosylated (N-linked (GlcNAc...) asparagine). The segment at 142–423 is disordered; the sequence is GMFRIKGEQG…KGERGENSVS (282 aa). The region spanning 147–419 is the Collagen-like domain; sequence KGEQGAPGLQ…VKGEKGERGE (273 aa). 3 stretches are compositionally biased toward low complexity: residues 203–227, 290–345, and 380–398; these read EAGLQGPQGAPGKQGATGTPGPQGE, LAGF…PGAT, and SPGLAGPKGAPGQAGQKGD. The segment covering 410–419 has biased composition (basic and acidic residues); sequence VKGEKGERGE. The region spanning 424 to 519 is the SRCR domain; that stretch reads VRIVGSSNRG…HEEDAGVECS (96 aa). Cystine bridges form between cysteine 447/cysteine 508, cysteine 460/cysteine 518, and cysteine 488/cysteine 498.

In terms of assembly, homotrimer; disulfide-linked. Trimers may assemble in larger oligomers thus resulting in the creation of a large surface capable of interacting with very large ligands. Post-translationally, N-glycosylated. As to expression, expressed in alveolar macrophages (at protein level). Detected in macrophages from various tissues including thymus, kidney, Kupffer cells of liver, and spleen.

Its subcellular location is the cell membrane. Functionally, pattern recognition receptor (PRR) which binds Gram-positive and Gram-negative bacteria. Also plays a role in binding of unopsonized particles by alveolar macrophages. Binds to the secretoglobin SCGB3A2. The protein is Macrophage receptor MARCO (MARCO) of Homo sapiens (Human).